The following is a 323-amino-acid chain: uncharacterized protein (323 aa).

Transmembrane regions (helical) follow at residues 8 to 28, 32 to 52, and 92 to 112; these read FLVIILVFLAVILTELIMFME, LTLLKCFIFVDLLLVFIPFSL, and ITIFWVYTIWNGLNSIFCGIF.

The protein localises to the mitochondrion membrane. This is an uncharacterized protein from Neurospora crassa (strain ATCC 24698 / 74-OR23-1A / CBS 708.71 / DSM 1257 / FGSC 987).